A 491-amino-acid polypeptide reads, in one-letter code: Glutamyl-tRNA(Gln) amidotransferase subunit A (491 aa).

Active-site charge relay system residues include K80 and S155. Catalysis depends on S179, which acts as the Acyl-ester intermediate.

Belongs to the amidase family. GatA subfamily. In terms of assembly, heterotrimer of A, B and C subunits.

It catalyses the reaction L-glutamyl-tRNA(Gln) + L-glutamine + ATP + H2O = L-glutaminyl-tRNA(Gln) + L-glutamate + ADP + phosphate + H(+). Allows the formation of correctly charged Gln-tRNA(Gln) through the transamidation of misacylated Glu-tRNA(Gln) in organisms which lack glutaminyl-tRNA synthetase. The reaction takes place in the presence of glutamine and ATP through an activated gamma-phospho-Glu-tRNA(Gln). This is Glutamyl-tRNA(Gln) amidotransferase subunit A from Salinispora arenicola (strain CNS-205).